The primary structure comprises 76 residues: ATP synthase subunit 9, mitochondrial (76 aa).

Helical transmembrane passes span 14–34 (MATL…VALI) and 52–72 (ILGF…SFLL).

This sequence belongs to the ATPase C chain family. As to quaternary structure, F-type ATPases have 2 components, CF(1) - the catalytic core - and CF(0) - the membrane proton channel. CF(1) has five subunits: alpha(3), beta(3), gamma(1), delta(1), epsilon(1). CF(0) has three main subunits: a, b and c.

The protein resides in the mitochondrion membrane. Functionally, mitochondrial membrane ATP synthase (F(1)F(0) ATP synthase or Complex V) produces ATP from ADP in the presence of a proton gradient across the membrane which is generated by electron transport complexes of the respiratory chain. F-type ATPases consist of two structural domains, F(1) - containing the extramembraneous catalytic core and F(0) - containing the membrane proton channel, linked together by a central stalk and a peripheral stalk. During catalysis, ATP synthesis in the catalytic domain of F(1) is coupled via a rotary mechanism of the central stalk subunits to proton translocation. Part of the complex F(0) domain. A homomeric c-ring of probably 10 subunits is part of the complex rotary element. This Debaryomyces hansenii (strain ATCC 36239 / CBS 767 / BCRC 21394 / JCM 1990 / NBRC 0083 / IGC 2968) (Yeast) protein is ATP synthase subunit 9, mitochondrial (ATP9).